The following is a 219-amino-acid chain: MQRIIIVGIDTGVGKTIVSAILARALNAEYWKPIQAGNLENSDSNIVHELSGAYCHPEAYRLHKPLSPHKAAQIDNVSIEESHICAPKTTSNLIIETSGGFLSPCTSKRLQGDVFSSWSCSWILVSQAYLGSINHTCLTVEAMRSRNLNILGMVVNGYPEDEEHWLTQEIKLPIIGTLAKEKEITKTIISCYAEQWKEVWTSNHQGIQGVSGTPSLNLH.

12-17 is an ATP binding site; that stretch reads GVGKTI. Threonine 16 provides a ligand contact to Mg(2+). Residue lysine 32 is part of the active site. ATP-binding positions include aspartate 43 and 96–99; that span reads ETSG. Residues aspartate 43 and glutamate 96 each contribute to the Mg(2+) site.

It belongs to the dethiobiotin synthetase family. As to quaternary structure, homodimer. Mg(2+) serves as cofactor.

It is found in the cytoplasm. It carries out the reaction (7R,8S)-7,8-diammoniononanoate + CO2 + ATP = (4R,5S)-dethiobiotin + ADP + phosphate + 3 H(+). It participates in cofactor biosynthesis; biotin biosynthesis; biotin from 7,8-diaminononanoate: step 1/2. Its function is as follows. Catalyzes a mechanistically unusual reaction, the ATP-dependent insertion of CO2 between the N7 and N8 nitrogen atoms of 7,8-diaminopelargonic acid (DAPA, also called 7,8-diammoniononanoate) to form a ureido ring. This Chlamydia pneumoniae (Chlamydophila pneumoniae) protein is ATP-dependent dethiobiotin synthetase BioD.